The sequence spans 118 residues: NADH-ubiquinone oxidoreductase chain 3 (118 aa).

3 helical membrane-spanning segments follow: residues 9-29 (IYLV…FLFA), 62-82 (LVSI…PWAV), and 87-107 (IDLF…IGFL).

The protein belongs to the complex I subunit 3 family.

Its subcellular location is the mitochondrion membrane. The enzyme catalyses a ubiquinone + NADH + 5 H(+)(in) = a ubiquinol + NAD(+) + 4 H(+)(out). In terms of biological role, core subunit of the mitochondrial membrane respiratory chain NADH dehydrogenase (Complex I) that is believed to belong to the minimal assembly required for catalysis. Complex I functions in the transfer of electrons from NADH to the respiratory chain. The immediate electron acceptor for the enzyme is believed to be ubiquinone. In Pinus sylvestris (Scotch pine), this protein is NADH-ubiquinone oxidoreductase chain 3 (NAD3).